Here is a 71-residue protein sequence, read N- to C-terminus: MRKSFYTWLMTERNPKSNNPKAILADLAFEEAAFPKHTDDFDEVSRFLEEHASFSFNLGDFDSIWQEYLEH.

Belongs to the UPF0346 family.

This Streptococcus pneumoniae (strain P1031) protein is UPF0346 protein SPP_0954.